The chain runs to 363 residues: Phosphoserine aminotransferase (363 aa).

Positions 9 and 42 each coordinate L-glutamate. Pyridoxal 5'-phosphate is bound by residues 76–77 (AR), tryptophan 102, threonine 154, aspartate 174, and glutamine 197. Lysine 198 carries the post-translational modification N6-(pyridoxal phosphate)lysine. A pyridoxal 5'-phosphate-binding site is contributed by 240-241 (NT).

Belongs to the class-V pyridoxal-phosphate-dependent aminotransferase family. SerC subfamily. In terms of assembly, homodimer. Pyridoxal 5'-phosphate serves as cofactor.

The protein resides in the cytoplasm. The catalysed reaction is O-phospho-L-serine + 2-oxoglutarate = 3-phosphooxypyruvate + L-glutamate. The enzyme catalyses 4-(phosphooxy)-L-threonine + 2-oxoglutarate = (R)-3-hydroxy-2-oxo-4-phosphooxybutanoate + L-glutamate. Its pathway is amino-acid biosynthesis; L-serine biosynthesis; L-serine from 3-phospho-D-glycerate: step 2/3. The protein operates within cofactor biosynthesis; pyridoxine 5'-phosphate biosynthesis; pyridoxine 5'-phosphate from D-erythrose 4-phosphate: step 3/5. Catalyzes the reversible conversion of 3-phosphohydroxypyruvate to phosphoserine and of 3-hydroxy-2-oxo-4-phosphonooxybutanoate to phosphohydroxythreonine. This is Phosphoserine aminotransferase from Baumannia cicadellinicola subsp. Homalodisca coagulata.